Reading from the N-terminus, the 142-residue chain is Ribosome-binding factor A (142 aa).

The interval 118–142 (DKNGDAEVDDTQVDDEPSVDSEKGE) is disordered. Acidic residues predominate over residues 123 to 136 (AEVDDTQVDDEPSV).

The protein belongs to the RbfA family. In terms of assembly, monomer. Binds 30S ribosomal subunits, but not 50S ribosomal subunits or 70S ribosomes.

It is found in the cytoplasm. One of several proteins that assist in the late maturation steps of the functional core of the 30S ribosomal subunit. Associates with free 30S ribosomal subunits (but not with 30S subunits that are part of 70S ribosomes or polysomes). Required for efficient processing of 16S rRNA. May interact with the 5'-terminal helix region of 16S rRNA. The sequence is that of Ribosome-binding factor A from Colwellia psychrerythraea (strain 34H / ATCC BAA-681) (Vibrio psychroerythus).